Reading from the N-terminus, the 342-residue chain is Methylthioribose-1-phosphate isomerase (342 aa).

Residues 49–51 (RGA), R86, and Q187 contribute to the substrate site. D228 acts as the Proton donor in catalysis. Residue 238 to 239 (NK) coordinates substrate.

This sequence belongs to the eIF-2B alpha/beta/delta subunits family. MtnA subfamily.

It carries out the reaction 5-(methylsulfanyl)-alpha-D-ribose 1-phosphate = 5-(methylsulfanyl)-D-ribulose 1-phosphate. It functions in the pathway amino-acid biosynthesis; L-methionine biosynthesis via salvage pathway; L-methionine from S-methyl-5-thio-alpha-D-ribose 1-phosphate: step 1/6. Catalyzes the interconversion of methylthioribose-1-phosphate (MTR-1-P) into methylthioribulose-1-phosphate (MTRu-1-P). This Enterobacter sp. (strain 638) protein is Methylthioribose-1-phosphate isomerase.